A 509-amino-acid polypeptide reads, in one-letter code: ATP synthase subunit alpha (509 aa).

Residue 169–176 coordinates ATP; it reads GDRQTGKT.

The protein belongs to the ATPase alpha/beta chains family. F-type ATPases have 2 components, CF(1) - the catalytic core - and CF(0) - the membrane proton channel. CF(1) has five subunits: alpha(3), beta(3), gamma(1), delta(1), epsilon(1). CF(0) has three main subunits: a(1), b(2) and c(9-12). The alpha and beta chains form an alternating ring which encloses part of the gamma chain. CF(1) is attached to CF(0) by a central stalk formed by the gamma and epsilon chains, while a peripheral stalk is formed by the delta and b chains.

The protein localises to the cell inner membrane. It catalyses the reaction ATP + H2O + 4 H(+)(in) = ADP + phosphate + 5 H(+)(out). Produces ATP from ADP in the presence of a proton gradient across the membrane. The alpha chain is a regulatory subunit. This Methylocella silvestris (strain DSM 15510 / CIP 108128 / LMG 27833 / NCIMB 13906 / BL2) protein is ATP synthase subunit alpha.